The sequence spans 299 residues: MNQEDKEKPIEEASSSMEREHMFDKVVTPSDVGKLNRLVIPKQHAERYFPLDNSTTNDSNKGLLLNFEDRSGNSWRFRYSYWNSSQSYVMTKGWSRFVKDKKLDAGDIVSFQRDSCNKDKLYIDWRRRPKIPDHHHQQFAGAMFPRFYTFPHPQMPTNYETHNLYHRFHQRDLGIGYYVRSMERSHPTAVIESVPVMMQRRAQVASMASRGEKRLRLFGVDMECGGGGGSVNSTEEESSSSGGSIPRGRVSMVGAGSLLQLRLVSSDDESLVAMEAASLEDHHFFTKKGKPSLSFDLDR.

The interval 1 to 21 is disordered; it reads MNQEDKEKPIEEASSSMEREH. The segment at residues 23-129 is a DNA-binding region (TF-B3); that stretch reads FDKVVTPSDV…KLYIDWRRRP (107 aa). The disordered stretch occupies residues 226-249; it reads GGGGSVNSTEEESSSSGGSIPRGR.

The protein localises to the nucleus. Functionally, regulates lateral organ growth. Functionally redundant with NGA1, NGA3 and NGA4. This is B3 domain-containing transcription factor NGA2 (NGA2) from Arabidopsis thaliana (Mouse-ear cress).